A 929-amino-acid polypeptide reads, in one-letter code: Protocadherin gamma-B3 (929 aa).

An N-terminal signal peptide occupies residues 1 to 30; the sequence is MGNSSGWRGPAGQRRMLFLFLLSLLDQALS. Cadherin domains lie at 31–133, 134–242, 243–347, 348–452, 453–562, and 570–675; these read EPIR…PPTF, SQNI…PPVF, TQDM…APEI, TLAS…VPVF, HQAS…APLV, and EGSA…QPDL. Residues 31–691 are Extracellular-facing; that stretch reads EPIRYAIPEE…SDPQAELQFH (661 aa). An N-linked (GlcNAc...) asparagine glycan is attached at N136. Residues N419 and N545 are each glycosylated (N-linked (GlcNAc...) asparagine). The helical transmembrane segment at 692–712 threads the bilayer; sequence LVVALALISVLFLLAVILAIS. Residues 713-929 lie on the Cytoplasmic side of the membrane; that stretch reads LRLRCSSRPA…KKKSGKKEKK (217 aa). Disordered stretches follow at residues 791–838 and 899–929; these read NDNP…WPNN and ATLT…KEKK. Positions 919-929 are enriched in basic residues; it reads NKKKSGKKEKK.

It is found in the cell membrane. Functionally, potential calcium-dependent cell-adhesion protein. May be involved in the establishment and maintenance of specific neuronal connections in the brain. This chain is Protocadherin gamma-B3 (PCDHGB3), found in Homo sapiens (Human).